We begin with the raw amino-acid sequence, 407 residues long: Argininosuccinate synthase (407 aa).

Residues 13 to 21 and A40 each bind ATP; that span reads AYSGGLDTS. 2 residues coordinate L-citrulline: Y91 and S96. Position 121 (G121) interacts with ATP. Residues T123, N127, and D128 each coordinate L-aspartate. L-citrulline is bound at residue N127. L-citrulline contacts are provided by R131, S182, S191, E267, and Y279.

The protein belongs to the argininosuccinate synthase family. Type 1 subfamily. Homotetramer.

It localises to the cytoplasm. The enzyme catalyses L-citrulline + L-aspartate + ATP = 2-(N(omega)-L-arginino)succinate + AMP + diphosphate + H(+). It functions in the pathway amino-acid biosynthesis; L-arginine biosynthesis; L-arginine from L-ornithine and carbamoyl phosphate: step 2/3. In Agrobacterium fabrum (strain C58 / ATCC 33970) (Agrobacterium tumefaciens (strain C58)), this protein is Argininosuccinate synthase.